We begin with the raw amino-acid sequence, 339 residues long: DNA double-strand break repair nuclease NurA (339 aa).

Mn(2+)-binding residues include aspartate 58 and aspartate 133.

This sequence belongs to the NurA family. Homodimer. Forms a complex with HerA. Requires Mn(2+) as cofactor.

Nuclease activity requires the presence of HerA. Another report shows endo- and exonuclease activity in the absence of HerA; HerA stimulates the exo- but not endonuclease. LhrC-Core (Hel112) inhibits the exonuclease activity of the HerA-NurA complex on ss- and dsDNA, has no effect on the nicking activity of NurA. Endo- and exonuclease activities are inhibited by ATP; ATP may subtract divalent ions from the reaction preventing nuclease activity, HerA can alleviate ATP inhibition. Involved in DNA double-strand break (DSB) repair. Probably acts with HerA to stimulate resection of the 5' strand and produce the long 3' single-strand that is required for RadA loading. NurA and HerA together stimulate the end-resection of six nucleotides of a linear DNA substrate. Processes linear double-stranded (ds)DNA probes with 3' or 5' single-stranded overhangs or blunt ends. Has endonuclease activity on single-stranded (ss)DNA and nicking activity on dsDNA without HerA as well as 5'- and 3'-exonuclease activity on ssDNA. Binds ssDNA, dsDNA, forked and bubble DNA equally well. The sequence is that of DNA double-strand break repair nuclease NurA from Saccharolobus solfataricus (strain ATCC 35092 / DSM 1617 / JCM 11322 / P2) (Sulfolobus solfataricus).